The sequence spans 70 residues: DNA-directed RNA polymerase subunit omega (70 aa).

Belongs to the RNA polymerase subunit omega family. As to quaternary structure, the RNAP catalytic core consists of 2 alpha, 1 beta, 1 beta' and 1 omega subunit. When a sigma factor is associated with the core the holoenzyme is formed, which can initiate transcription.

The catalysed reaction is RNA(n) + a ribonucleoside 5'-triphosphate = RNA(n+1) + diphosphate. Promotes RNA polymerase assembly. Latches the N- and C-terminal regions of the beta' subunit thereby facilitating its interaction with the beta and alpha subunits. In Caldanaerobacter subterraneus subsp. tengcongensis (strain DSM 15242 / JCM 11007 / NBRC 100824 / MB4) (Thermoanaerobacter tengcongensis), this protein is DNA-directed RNA polymerase subunit omega.